Reading from the N-terminus, the 228-residue chain is Large ribosomal subunit protein uL3 (228 aa).

Positions 157 to 176 (CHRHAGGTGMSASPSRTFKG) are disordered.

The protein belongs to the universal ribosomal protein uL3 family. In terms of assembly, part of the 50S ribosomal subunit. Forms a cluster with proteins L14 and L19.

In terms of biological role, one of the primary rRNA binding proteins, it binds directly near the 3'-end of the 23S rRNA, where it nucleates assembly of the 50S subunit. The polypeptide is Large ribosomal subunit protein uL3 (Rhodopirellula baltica (strain DSM 10527 / NCIMB 13988 / SH1)).